Consider the following 792-residue polypeptide: Ribonucleoside-diphosphate reductase large subunit (792 aa).

Residues threonine 200, 215 to 216 (SC), glycine 246, 415 to 419 (NLCAE), and 606 to 610 (PTAGT) contribute to the substrate site. Cysteine 216 and cysteine 431 are oxidised to a cystine. The active-site Proton acceptor is the asparagine 415. Cysteine 417 functions as the Cysteine radical intermediate in the catalytic mechanism. The active-site Proton acceptor is glutamate 419. The disordered stretch occupies residues 758–781 (SPPHSGMKQDGAWLPGPKNPEEES).

It belongs to the ribonucleoside diphosphate reductase large chain family. Heterotetramer composed of a homodimer of the large subunit (R1) and a homodimer of the small subunit (R2). Larger multisubunit protein complex are also active, composed of (R1)n(R2)n.

It carries out the reaction a 2'-deoxyribonucleoside 5'-diphosphate + [thioredoxin]-disulfide + H2O = a ribonucleoside 5'-diphosphate + [thioredoxin]-dithiol. Ribonucleoside-diphosphate reductase holoenzyme provides the precursors necessary for viral DNA synthesis. Allows virus growth in non-dividing cells, as well as reactivation from latency in infected hosts. Catalyzes the biosynthesis of deoxyribonucleotides from the corresponding ribonucleotides. This chain is Ribonucleoside-diphosphate reductase large subunit, found in Human herpesvirus 8 type P (isolate GK18) (HHV-8).